The primary structure comprises 561 residues: MSDNRNSQVVTQGVQRAPNRAMLRAVGFGDDDFTKPIVGLANGFSTITPCNMGIDSLATRAEASIRTAGAMPQKFGTITISDGISMGTEGMKYSLVSREVIADSIETACMGQSMDGVLAIGGCDKNMPGAMLAMARMNIPAIFVYGGTIKPGHLNGEDLTVVSAFEAVGQHSAGRISEAELTAVEKHACPGAGSCGGMYTANTMSSAFEAMGMSLMYSSTMAAEDEEKAVSAEQSAAVLVEAIHKQILPRDILTRKAFENAIAVIMAVGGSTNAVLHLLAISRAAGDSLTLDDFETIRAQVPVICDLKPSGRYVATDLHKAGGIPLVMKMLLEHGLLHGDALTITGKTIAEQLADVPSEPSPDQDVIRPWDNPMYKQGHLAILRGNLATEGAVAKITGIKNPQITGPARVFESEEACLEAILAGKIQPNDVIVVRYEGPKGGPGMREMLAPTSAIIGAGLGDSVGLITDGRFSGGTYGMVVGHVAPEAAVGGTIALVQEGDQITIDAHARKLELHVSDQELKERKEKWEQPKPLYNKGVLAKYAKLVSSSSVGAVTDLDLF.

Position 50 (Cys50) interacts with [2Fe-2S] cluster. Position 82 (Asp82) interacts with Mg(2+). Cys123 is a [2Fe-2S] cluster binding site. Mg(2+) is bound by residues Asp124 and Lys125. At Lys125 the chain carries N6-carboxylysine. A [2Fe-2S] cluster-binding site is contributed by Cys195. Glu447 serves as a coordination point for Mg(2+). The active-site Proton acceptor is the Ser473.

This sequence belongs to the IlvD/Edd family. Homodimer. It depends on [2Fe-2S] cluster as a cofactor. Mg(2+) serves as cofactor.

It catalyses the reaction (2R)-2,3-dihydroxy-3-methylbutanoate = 3-methyl-2-oxobutanoate + H2O. The catalysed reaction is (2R,3R)-2,3-dihydroxy-3-methylpentanoate = (S)-3-methyl-2-oxopentanoate + H2O. The protein operates within amino-acid biosynthesis; L-isoleucine biosynthesis; L-isoleucine from 2-oxobutanoate: step 3/4. Its pathway is amino-acid biosynthesis; L-valine biosynthesis; L-valine from pyruvate: step 3/4. Functions in the biosynthesis of branched-chain amino acids. Catalyzes the dehydration of (2R,3R)-2,3-dihydroxy-3-methylpentanoate (2,3-dihydroxy-3-methylvalerate) into 2-oxo-3-methylpentanoate (2-oxo-3-methylvalerate) and of (2R)-2,3-dihydroxy-3-methylbutanoate (2,3-dihydroxyisovalerate) into 2-oxo-3-methylbutanoate (2-oxoisovalerate), the penultimate precursor to L-isoleucine and L-valine, respectively. In Acaryochloris marina (strain MBIC 11017), this protein is Dihydroxy-acid dehydratase.